A 328-amino-acid polypeptide reads, in one-letter code: 2-hydroxyisoflavanone dehydratase (328 aa).

Positions 85-87 (HGG) match the Involved in the stabilization of the negatively charged intermediate by the formation of the oxyanion hole motif. Catalysis depends on residues threonine 173, aspartate 272, and histidine 304.

The protein belongs to the 'GDXG' lipolytic enzyme family.

It carries out the reaction (2R,3S)-2,4',7-trihydroxyisoflavanone = daidzein + H2O + H(+). It catalyses the reaction 2-hydroxy-2,3-dihydrogenistein = genistein + H2O + H(+). The enzyme catalyses a carboxylic ester + H2O = an alcohol + a carboxylate + H(+). The protein operates within secondary metabolite biosynthesis; flavonoid biosynthesis. Functionally, dehydratase that mediates the biosynthesis of isoflavonoids. Can better use 2,7-dihydroxy-4'-methoxyisoflavanone as substrate. Has also a slight carboxylesterase activity toward p-nitrophenyl butyrate. The polypeptide is 2-hydroxyisoflavanone dehydratase (HIDM) (Glycyrrhiza echinata (Licorice)).